A 357-amino-acid chain; its full sequence is 4-hydroxy-2-oxovalerate aldolase (357 aa).

The segment at 1–21 is disordered; the sequence is MSQEAARDAAAGRPVQIHDPT. One can recognise a Pyruvate carboxyltransferase domain in the interval 15 to 265; the sequence is VQIHDPTLRD…RTGIDLYRLL (251 aa). Substrate is bound at residue 23-24; sequence RD. A Mn(2+)-binding site is contributed by Asp24. His27 serves as the catalytic Proton acceptor. Substrate contacts are provided by Ser177 and His204. Mn(2+)-binding residues include His204 and His206.

It belongs to the 4-hydroxy-2-oxovalerate aldolase family.

It carries out the reaction (S)-4-hydroxy-2-oxopentanoate = acetaldehyde + pyruvate. Functionally, involved in the biosynthesis of the peptidyl nucleoside antibiotic nikkomycin. In Streptomyces tendae, this protein is 4-hydroxy-2-oxovalerate aldolase.